A 466-amino-acid chain; its full sequence is A-type ATP synthase subunit B 2 (466 aa).

The protein belongs to the ATPase alpha/beta chains family. Has multiple subunits with at least A(3), B(3), C, D, E, F, H, I and proteolipid K(x).

It localises to the cell membrane. Component of the A-type ATP synthase that produces ATP from ADP in the presence of a proton gradient across the membrane. The B chain is a regulatory subunit. This chain is A-type ATP synthase subunit B 2, found in Methanospirillum hungatei JF-1 (strain ATCC 27890 / DSM 864 / NBRC 100397 / JF-1).